A 134-amino-acid chain; its full sequence is Ribosome-binding factor A (134 aa).

This sequence belongs to the RbfA family. As to quaternary structure, monomer. Binds 30S ribosomal subunits, but not 50S ribosomal subunits or 70S ribosomes.

It is found in the cytoplasm. Its function is as follows. One of several proteins that assist in the late maturation steps of the functional core of the 30S ribosomal subunit. Associates with free 30S ribosomal subunits (but not with 30S subunits that are part of 70S ribosomes or polysomes). Required for efficient processing of 16S rRNA. May interact with the 5'-terminal helix region of 16S rRNA. This is Ribosome-binding factor A from Rhizobium leguminosarum bv. trifolii (strain WSM2304).